The primary structure comprises 319 residues: MFNPQLNKNGELQHLLTIEGLPKANILHILDTASSFVSIGDREVKKVPLMRGKSVFNLFFENSTRTRTTFEIASKRLSADVINLNIQASSSSKGESLLDTIDNLSAMHADMFVVRHAQSGAPYLIAKHLSDTSQSHVHVVNAGDGRHAHPTQGLLDMYTIRHYKKDFSNLTVAIVGDILHSRVARSDIHALTTLGVPEIRAIGPRTLLPSGLEQMGVRVFTDINKGLKDVDVIIMLRLQNERMSGALLPSAQEFFKSYGLTTERLALAKPDAIVMHPGPMNRGVEIESAVADGTQAVILPQVTFGIAVRMAVMSILAGN.

Residues Arg-65 and Thr-66 each contribute to the carbamoyl phosphate site. Position 93 (Lys-93) interacts with L-aspartate. 3 residues coordinate carbamoyl phosphate: Arg-115, His-149, and Gln-152. The L-aspartate site is built by Arg-182 and Arg-237. Gly-278 and Pro-279 together coordinate carbamoyl phosphate.

It belongs to the aspartate/ornithine carbamoyltransferase superfamily. ATCase family. In terms of assembly, heterododecamer (2C3:3R2) of six catalytic PyrB chains organized as two trimers (C3), and six regulatory PyrI chains organized as three dimers (R2).

It carries out the reaction carbamoyl phosphate + L-aspartate = N-carbamoyl-L-aspartate + phosphate + H(+). It participates in pyrimidine metabolism; UMP biosynthesis via de novo pathway; (S)-dihydroorotate from bicarbonate: step 2/3. In terms of biological role, catalyzes the condensation of carbamoyl phosphate and aspartate to form carbamoyl aspartate and inorganic phosphate, the committed step in the de novo pyrimidine nucleotide biosynthesis pathway. This chain is Aspartate carbamoyltransferase catalytic subunit, found in Janthinobacterium sp. (strain Marseille) (Minibacterium massiliensis).